Consider the following 785-residue polypeptide: 1-phosphatidylinositol 4,5-bisphosphate phosphodiesterase delta-3 (785 aa).

The tract at residues 1-43 (MLCGGWKRSRRSPEESRVSAQVAAPLAFPPSPASSDSSTKRPG) is disordered. The region spanning 65–168 (SRLLKIRSRT…WVRGLAKLRA (104 aa)) is the PH domain. Residues 69–97 (KIRSRTWHKERLYRLQEDGLSVWFQRRIP) form a substrate binding region. S101 carries the phosphoserine modification. 3 consecutive EF-hand domains span residues 178 to 213 (RLDH…VNVD), 214 to 249 (MNDM…LLKR), and 246 to 281 (LLKR…QGED). Ca(2+) is bound by residues D191, D193, D195, K197, E202, D227, S229, N231, R233, and E238. The 146-residue stretch at 333–478 (QDMGQPLAHY…LKGRILVKGK (146 aa)) folds into the PI-PLC X-box domain. H348 is a catalytic residue. The Ca(2+) site is built by N349, E378, and D380. The active site involves H393. E427 provides a ligand contact to Ca(2+). Residues K476 and K478 each contribute to the substrate site. Over residues 484-493 (RSEDGRILSD) the composition is skewed to basic and acidic residues. Residues 484–517 (RSEDGRILSDREEEEEEEEEAEEALEAAEQRSRA) are disordered. Residue S492 is modified to Phosphoserine. Acidic residues predominate over residues 494–509 (REEEEEEEEEAEEALE). One can recognise a PI-PLC Y-box domain in the interval 524–640 (LSALAVYCCA…GYVLKPAYLR (117 aa)). A substrate-binding site is contributed by S553. S569 is modified (phosphoserine). Position 580 (R580) interacts with substrate. The region spanning 636 to 765 (PAYLRQLNTT…QGYRHIHLLS (130 aa)) is the C2 domain. I679, D681, N705, D734, Y735, and D736 together coordinate Ca(2+).

The cofactor is Ca(2+). As to expression, expressed in cerebellum and cerebral cortex.

The protein localises to the membrane. Its subcellular location is the cytoplasm. It is found in the cleavage furrow. The catalysed reaction is a 1,2-diacyl-sn-glycero-3-phospho-(1D-myo-inositol-4,5-bisphosphate) + H2O = 1D-myo-inositol 1,4,5-trisphosphate + a 1,2-diacyl-sn-glycerol + H(+). Strongly activated by phosphatidic acid. Inhibited by phosphatidylethanolamine (PtdEtn), phosphatidylcholine (PtdCho), sphingomyelin and phosphatidylserine (PtdSer). Functionally, hydrolyzes the phosphatidylinositol 4,5-bisphosphate (PIP2) to generate 2 second messenger molecules diacylglycerol (DAG) and inositol 1,4,5-trisphosphate (IP3). DAG mediates the activation of protein kinase C (PKC), while IP3 releases Ca(2+) from intracellular stores. Essential for trophoblast and placental development. May participate in cytokinesis by hydrolyzing PIP2 at the cleavage furrow. Regulates neurite outgrowth through the inhibition of RhoA/Rho kinase signaling. This is 1-phosphatidylinositol 4,5-bisphosphate phosphodiesterase delta-3 from Mus musculus (Mouse).